The primary structure comprises 447 residues: Voltage-gated purine nucleotide uniporter SLC17A9 (447 aa).

The disordered stretch occupies residues 1–26 (MPSQRSSLMQPIPEETRKTPSAAAED). Residues 14-26 (EETRKTPSAAAED) are compositionally biased toward basic and acidic residues. The next 11 helical transmembrane spans lie at 36-58 (LWTGMLLLGTCLLYCTRVTMPVC), 74-94 (GIVLSSFFWGYCLTQVVGGHL), 103-123 (VILLSASAWGFITVTTPLLAH), 129-149 (LAFVTFSRILTGLLQGVYFPA), 169-189 (TVGAGSQVGTLVTGGIGSVLL), 197-217 (VFYFSGGLTLLWVYYVYKYLL), 252-272 (VWAVICSQLSSACSFFILLSW), 287-307 (WVFNVVPWLLAIPASLFSGFI), 327-347 (VMGLGLSSIFALCLGHTTSFL), 380-400 (GFLFGVANTAGALAGVVGVCL), and 413-433 (CVFHLVAIVSNLGLGTFLVFG).

Belongs to the major facilitator superfamily. Sodium/anion cotransporter family.

It is found in the cytoplasmic vesicle. Its subcellular location is the secretory vesicle. The protein localises to the chromaffin granule membrane. It localises to the secretory vesicle membrane. The protein resides in the lysosome membrane. The enzyme catalyses ATP(in) = ATP(out). It carries out the reaction ADP(in) = ADP(out). It catalyses the reaction GTP(in) = GTP(out). Activity is chloride-dependent. In terms of biological role, voltage-gated ATP nucleotide uniporter that can also transport the purine nucleotides ADP and GTP. Uses the membrane potential as the driving force to control ATP accumulation in lysosomes and secretory vesicles. By controlling ATP storage in lysosomes, regulates ATP-dependent proteins of these organelles. Also indirectly regulates the exocytosis of ATP through its import into lysosomes in astrocytes and secretory vesicles such as adrenal chromaffin granules, mucin granules and synaptic vesicles. This is Voltage-gated purine nucleotide uniporter SLC17A9 from Rattus norvegicus (Rat).